Reading from the N-terminus, the 440-residue chain is Probable exopolygalacturonase C (440 aa).

Residues 1 to 19 (MSVFKASFLFLLSSSLVHG) form the signal peptide. N-linked (GlcNAc...) asparagine glycans are attached at residues Asn82 and Asn99. PbH1 repeat units follow at residues 215 to 236 (GTNI…AVGA), 238 to 259 (SHDT…SIGS), and 265 to 288 (TDFA…YAAR). Asp229 functions as the Proton donor in the catalytic mechanism. The active site involves His253. 4 N-linked (GlcNAc...) asparagine glycosylation sites follow: Asn269, Asn301, Asn311, and Asn334. A disulfide bridge links Cys387 with Cys393. Asn417 and Asn432 each carry an N-linked (GlcNAc...) asparagine glycan.

Belongs to the glycosyl hydrolase 28 family.

The protein resides in the secreted. It catalyses the reaction [(1-&gt;4)-alpha-D-galacturonosyl](n) + H2O = alpha-D-galacturonate + [(1-&gt;4)-alpha-D-galacturonosyl](n-1). In terms of biological role, specific in hydrolyzing the terminal glycosidic bond of polygalacturonic acid and oligogalacturonates. The protein is Probable exopolygalacturonase C (pgxC) of Aspergillus niger (strain ATCC MYA-4892 / CBS 513.88 / FGSC A1513).